Here is a 1030-residue protein sequence, read N- to C-terminus: E3 ubiquitin-protein ligase mib1 (1030 aa).

One can recognise an MIB/HERC2 1 domain in the interval 6 to 74; it reads NNRVMMEGVG…AYDVRILDSA (69 aa). The segment at 80–132 adopts a ZZ-type zinc-finger fold; the sequence is HDGTMCDTCRQQPIIGIRWKCAECTNYDLCTTCYHGDKHHLRHRFYRITTPGS. Residues C85, C88, C100, C103, C109, C112, H118, and H122 each contribute to the Zn(2+) site. Positions 143–221 constitute an MIB/HERC2 2 domain; the sequence is SKKITARGIF…MSDLKCVQDA (79 aa). 9 ANK repeats span residues 430–460, 463–492, 496–525, 529–558, 562–591, 595–627, 631–661, 665–694, and 698–727; these read DINE…DVNG, AGHT…DLEA, DGDR…DLNA, RRQT…HPSL, EGDT…DVTI, NGFN…IVDE, DGYT…NLDV, NQQT…KLDV, and DGDT…VSKV. RING-type zinc fingers lie at residues 817–852 and 864–899; these read CMVC…LICK and CVVC…VQCR. A coiled-coil region spans residues 957–986; it reads ALQRDKDNTNVNADVQKLQQQLQDIKEQTM. The RING-type 3 zinc finger occupies 987–1020; sequence CPVCLDRLKNMIFMCGHGTCQLCGDRMSECPICR.

As to quaternary structure, interacts with deltaA (dla) and deltaD (dld).

The protein localises to the cytoplasm. Its subcellular location is the cytoskeleton. It localises to the microtubule organizing center. The protein resides in the centrosome. It is found in the centriolar satellite. The protein localises to the cell membrane. It catalyses the reaction S-ubiquitinyl-[E2 ubiquitin-conjugating enzyme]-L-cysteine + [acceptor protein]-L-lysine = [E2 ubiquitin-conjugating enzyme]-L-cysteine + N(6)-ubiquitinyl-[acceptor protein]-L-lysine.. The protein operates within protein modification; protein ubiquitination. E3 ubiquitin-protein ligase that mediates ubiquitination of Delta receptors, which act as ligands of Notch proteins. Positively regulates the Delta-mediated Notch signaling by ubiquitinating the intracellular domain of Delta, leading to endocytosis of Delta receptors. It thereby participates in many processes regulated by the Notch signaling pathway, such as midline cell fate specification prior to germ layer formation, patterning of sensory cell differentiation in the ear, neurogenesis of the hindbrain and commitment to a secretory fate in the intestine. Essential for early embryonic development. The polypeptide is E3 ubiquitin-protein ligase mib1 (mib1) (Danio rerio (Zebrafish)).